Consider the following 578-residue polypeptide: Peptidyl-prolyl cis-trans isomerase-like 2 (578 aa).

The region spanning 40-114 (RRLPFNFCAA…SDSLGAGLSD (75 aa)) is the U-box domain. The tract at residues 240–260 (KAREQGGDVNRSSTALTKPTG) is disordered. The 155-residue stretch at 321–475 (ATGFARMETN…NKILIKDIVI (155 aa)) folds into the PPIase cyclophilin-type domain. The interval 505–578 (GTDDDKTTWT…GGGFGNFDNW (74 aa)) is disordered. Residues 538 to 548 (KTTTQQSTPTV) show a composition bias toward polar residues. Residues 551–560 (ADLEDVDTWE) show a composition bias toward acidic residues. A compositionally biased stretch (gly residues) spans 569–578 (GGGFGNFDNW).

It belongs to the cyclophilin-type PPIase family. PPIL2 subfamily.

It localises to the nucleus. It catalyses the reaction [protein]-peptidylproline (omega=180) = [protein]-peptidylproline (omega=0). The enzyme catalyses S-ubiquitinyl-[E2 ubiquitin-conjugating enzyme]-L-cysteine + [acceptor protein]-L-lysine = [E2 ubiquitin-conjugating enzyme]-L-cysteine + N(6)-ubiquitinyl-[acceptor protein]-L-lysine.. The protein operates within protein modification; protein ubiquitination. Functionally, may catalyze the cis-trans isomerization of proline imidic peptide bonds in oligopeptides thereby assisting the folding of proteins. May also function as a chaperone, playing a role in intracellular transport of proteins. May also have a protein ubiquitin ligase activity acting as an E3 ubiquitin protein ligase or as a ubiquitin-ubiquitin ligase promoting elongation of ubiquitin chains on proteins. The sequence is that of Peptidyl-prolyl cis-trans isomerase-like 2 (CYP8) from Gibberella zeae (strain ATCC MYA-4620 / CBS 123657 / FGSC 9075 / NRRL 31084 / PH-1) (Wheat head blight fungus).